We begin with the raw amino-acid sequence, 513 residues long: Flavonoid 3',5'-hydroxylase (513 aa).

Position 446 (C446) interacts with heme.

Belongs to the cytochrome P450 family. It depends on heme as a cofactor. In terms of tissue distribution, hypocotyl tissues.

It catalyses the reaction a 3',5'-unsubstituted flavanone + 2 reduced [NADPH--hemoprotein reductase] + 2 O2 = a 3',5'-dihydroxyflavanone + 2 oxidized [NADPH--hemoprotein reductase] + 2 H2O + 2 H(+). It participates in pigment biosynthesis; anthocyanin biosynthesis. In terms of biological role, catalyzes the 3'5'-hydroxylation of naringenin and eriodictyol to form 5,7,3,'4',5'-pentahydroxyflavanone and 3',5'-hydroxylation of dihydrokaempferol and dihydroquercetin to form dihydromyricetin. The sequence is that of Flavonoid 3',5'-hydroxylase (CYP75A2) from Solanum melongena (Eggplant).